We begin with the raw amino-acid sequence, 553 residues long: Ubiquitin carboxyl-terminal hydrolase 17-like protein 15 (553 aa).

A USP domain is found at 80 to 375 (AGLQNMGNTC…QAYVLFYIQK (296 aa)). The active-site Nucleophile is C89. Residue H334 is the Proton acceptor of the active site. 2 stretches are compositionally biased toward basic and acidic residues: residues 382–392 (SESVSRGREPR) and 398–413 (DTDRRATQGELKRDHP). 2 disordered regions span residues 382-413 (SESVSRGREPRALGAEDTDRRATQGELKRDHP) and 491-524 (STTPTHQESMNTGTLASLRGRARRSKGKNKHSKR). Polar residues predominate over residues 496–505 (HQESMNTGTL). The segment covering 510–524 (GRARRSKGKNKHSKR) has biased composition (basic residues).

This sequence belongs to the peptidase C19 family. USP17 subfamily.

The protein resides in the nucleus. It localises to the endoplasmic reticulum. The enzyme catalyses Thiol-dependent hydrolysis of ester, thioester, amide, peptide and isopeptide bonds formed by the C-terminal Gly of ubiquitin (a 76-residue protein attached to proteins as an intracellular targeting signal).. In terms of biological role, deubiquitinating enzyme that removes conjugated ubiquitin from specific proteins to regulate different cellular processes that may include cell proliferation, progression through the cell cycle, apoptosis, cell migration, and the cellular response to viral infection. This chain is Ubiquitin carboxyl-terminal hydrolase 17-like protein 15 (USP17L15), found in Homo sapiens (Human).